A 475-amino-acid chain; its full sequence is Sulfate adenylyltransferase subunit 1 (475 aa).

The region spanning 25-239 is the tr-type G domain; that stretch reads KSLLRFLTCG…EVLETVEIQR (215 aa). The G1 stretch occupies residues 34–41; sequence GSVDDGKS. 34 to 41 is a GTP binding site; it reads GSVDDGKS. The interval 92–96 is G2; sequence GITID. Residues 113–116 are G3; that stretch reads DTPG. GTP contacts are provided by residues 113–117 and 168–171; these read DTPGH and NKMD. Residues 168–171 form a G4 region; sequence NKMD. Residues 206–208 form a G5 region; the sequence is SAL.

It belongs to the TRAFAC class translation factor GTPase superfamily. Classic translation factor GTPase family. CysN/NodQ subfamily. Heterodimer composed of CysD, the smaller subunit, and CysN.

The catalysed reaction is sulfate + ATP + H(+) = adenosine 5'-phosphosulfate + diphosphate. The protein operates within sulfur metabolism; hydrogen sulfide biosynthesis; sulfite from sulfate: step 1/3. Its function is as follows. With CysD forms the ATP sulfurylase (ATPS) that catalyzes the adenylation of sulfate producing adenosine 5'-phosphosulfate (APS) and diphosphate, the first enzymatic step in sulfur assimilation pathway. APS synthesis involves the formation of a high-energy phosphoric-sulfuric acid anhydride bond driven by GTP hydrolysis by CysN coupled to ATP hydrolysis by CysD. This chain is Sulfate adenylyltransferase subunit 1, found in Escherichia coli O17:K52:H18 (strain UMN026 / ExPEC).